A 154-amino-acid polypeptide reads, in one-letter code: UPF0756 membrane protein YtwI (154 aa).

Transmembrane regions (helical) follow at residues 8 to 28, 54 to 74, 87 to 107, and 117 to 137; these read FLILLLAIALIAKNQSLLFAV, WGVTIITIAVLVPIATGEIGF, WIALGAGIAVALIAKNGLTLL, and LVIGTILAVALFGGVAVGPLI.

It belongs to the UPF0756 family.

Its subcellular location is the cell membrane. In Bacillus subtilis (strain 168), this protein is UPF0756 membrane protein YtwI (ytwI).